We begin with the raw amino-acid sequence, 162 residues long: Putative 4-hydroxy-4-methyl-2-oxoglutarate aldolase (162 aa).

Substrate contacts are provided by residues 75–78 (GDML) and R97. D98 lines the a divalent metal cation pocket.

This sequence belongs to the class II aldolase/RraA-like family. As to quaternary structure, homotrimer. The cofactor is a divalent metal cation.

It catalyses the reaction 4-hydroxy-4-methyl-2-oxoglutarate = 2 pyruvate. It carries out the reaction oxaloacetate + H(+) = pyruvate + CO2. Catalyzes the aldol cleavage of 4-hydroxy-4-methyl-2-oxoglutarate (HMG) into 2 molecules of pyruvate. Also contains a secondary oxaloacetate (OAA) decarboxylase activity due to the common pyruvate enolate transition state formed following C-C bond cleavage in the retro-aldol and decarboxylation reactions. This is Putative 4-hydroxy-4-methyl-2-oxoglutarate aldolase from Pseudomonas syringae pv. tomato (strain ATCC BAA-871 / DC3000).